The chain runs to 107 residues: Small ribosomal subunit protein uS10c (107 aa).

The protein belongs to the universal ribosomal protein uS10 family. As to quaternary structure, part of the 30S ribosomal subunit.

It localises to the plastid. It is found in the chloroplast. In terms of biological role, involved in the binding of tRNA to the ribosomes. This is Small ribosomal subunit protein uS10c from Thalassiosira pseudonana (Marine diatom).